An 830-amino-acid polypeptide reads, in one-letter code: Serine/threonine-protein kinase pkn2 (830 aa).

Residues 1 to 605 (MLAPDSLVLD…GELLRQRRRE (605 aa)) lie on the Cytoplasmic side of the membrane. A Protein kinase domain is found at 13 to 283 (FRVLRPLGSG…DALAAAHSAL (271 aa)). ATP contacts are provided by residues 19 to 27 (LGSGGMGEV) and Lys42. The active-site Proton acceptor is the Asp135. A disordered region spans residues 296 to 326 (VPQPGSGATPSSGTSVFGTGSASGSSSGPTG). The segment covering 299–326 (PGSGATPSSGTSVFGTGSASGSSSGPTG) has biased composition (low complexity). Positions 396–511 (TVMLTDIQGF…EPMEVIEAVE (116 aa)) constitute a Guanylate cyclase domain. The chain crosses the membrane as a helical span at residues 606 to 623 (AALVAGAVVLLGAGAAWL). At 624-830 (SQRNDAGTRA…AIKSLKQKSD (207 aa)) the chain is on the periplasmic side.

This sequence belongs to the protein kinase superfamily. Ser/Thr protein kinase family.

The protein localises to the cell membrane. It catalyses the reaction L-seryl-[protein] + ATP = O-phospho-L-seryl-[protein] + ADP + H(+). The enzyme catalyses L-threonyl-[protein] + ATP = O-phospho-L-threonyl-[protein] + ADP + H(+). Regulates the activity of endogenous beta-lactamase or related enzymes, by blocking their secretion by phosphorylation, in response to an external signal yet to be identified. The polypeptide is Serine/threonine-protein kinase pkn2 (pkn2) (Myxococcus xanthus).